Reading from the N-terminus, the 491-residue chain is Ketol-acid reductoisomerase (NADP(+)) (491 aa).

Residues 15–208 (AQLGKCRFMG…GGHRAGVLES (194 aa)) form the KARI N-terminal Rossmann domain. NADP(+) contacts are provided by residues 45–48 (CGAQ), R68, R76, S78, and 108–110 (DKQ). H132 is an active-site residue. Position 158 (G158) interacts with NADP(+). KARI C-terminal knotted domains follow at residues 209–344 (SFVA…TAPQ) and 345–484 (YEGK…MTDM). 4 residues coordinate Mg(2+): D217, E221, E389, and E393. A substrate-binding site is contributed by S414.

Belongs to the ketol-acid reductoisomerase family. It depends on Mg(2+) as a cofactor.

The enzyme catalyses (2R)-2,3-dihydroxy-3-methylbutanoate + NADP(+) = (2S)-2-acetolactate + NADPH + H(+). It carries out the reaction (2R,3R)-2,3-dihydroxy-3-methylpentanoate + NADP(+) = (S)-2-ethyl-2-hydroxy-3-oxobutanoate + NADPH + H(+). Its pathway is amino-acid biosynthesis; L-isoleucine biosynthesis; L-isoleucine from 2-oxobutanoate: step 2/4. It functions in the pathway amino-acid biosynthesis; L-valine biosynthesis; L-valine from pyruvate: step 2/4. Involved in the biosynthesis of branched-chain amino acids (BCAA). Catalyzes an alkyl-migration followed by a ketol-acid reduction of (S)-2-acetolactate (S2AL) to yield (R)-2,3-dihydroxy-isovalerate. In the isomerase reaction, S2AL is rearranged via a Mg-dependent methyl migration to produce 3-hydroxy-3-methyl-2-ketobutyrate (HMKB). In the reductase reaction, this 2-ketoacid undergoes a metal-dependent reduction by NADPH to yield (R)-2,3-dihydroxy-isovalerate. This Escherichia coli O8 (strain IAI1) protein is Ketol-acid reductoisomerase (NADP(+)).